The primary structure comprises 393 residues: 5-amino-6-(D-ribitylamino)uracil--L-tyrosine 4-hydroxyphenyl transferase (393 aa).

The Radical SAM core domain maps to 67–322; it reads VTYVINRNIN…GQWIVNHQPS (256 aa). 3 residues coordinate [4Fe-4S] cluster: C81, C85, and C88.

Belongs to the radical SAM superfamily. CofH family. As to quaternary structure, consists of two subunits, CofG and CofH. Requires [4Fe-4S] cluster as cofactor.

It catalyses the reaction 5-amino-6-(D-ribitylamino)uracil + L-tyrosine + S-adenosyl-L-methionine = 5-amino-5-(4-hydroxybenzyl)-6-(D-ribitylimino)-5,6-dihydrouracil + 2-iminoacetate + 5'-deoxyadenosine + L-methionine + H(+). It participates in cofactor biosynthesis; coenzyme F0 biosynthesis. Its function is as follows. Catalyzes the radical-mediated synthesis of 5-amino-5-(4-hydroxybenzyl)-6-(D-ribitylimino)-5,6-dihydrouracil from 5-amino-6-(D-ribitylamino)uracil and L-tyrosine. This Thermosynechococcus vestitus (strain NIES-2133 / IAM M-273 / BP-1) protein is 5-amino-6-(D-ribitylamino)uracil--L-tyrosine 4-hydroxyphenyl transferase.